The sequence spans 385 residues: UDP-N-acetylglucosamine--N-acetylmuramyl-(pentapeptide) pyrophosphoryl-undecaprenol N-acetylglucosamine transferase (385 aa).

Residues 24–26 (TAG), Asn143, Arg180, Ser214, and Gln310 contribute to the UDP-N-acetyl-alpha-D-glucosamine site.

This sequence belongs to the glycosyltransferase 28 family. MurG subfamily.

The protein localises to the cell membrane. It catalyses the reaction di-trans,octa-cis-undecaprenyl diphospho-N-acetyl-alpha-D-muramoyl-L-alanyl-D-glutamyl-meso-2,6-diaminopimeloyl-D-alanyl-D-alanine + UDP-N-acetyl-alpha-D-glucosamine = di-trans,octa-cis-undecaprenyl diphospho-[N-acetyl-alpha-D-glucosaminyl-(1-&gt;4)]-N-acetyl-alpha-D-muramoyl-L-alanyl-D-glutamyl-meso-2,6-diaminopimeloyl-D-alanyl-D-alanine + UDP + H(+). Its pathway is cell wall biogenesis; peptidoglycan biosynthesis. Its function is as follows. Cell wall formation. Catalyzes the transfer of a GlcNAc subunit on undecaprenyl-pyrophosphoryl-MurNAc-pentapeptide (lipid intermediate I) to form undecaprenyl-pyrophosphoryl-MurNAc-(pentapeptide)GlcNAc (lipid intermediate II). The polypeptide is UDP-N-acetylglucosamine--N-acetylmuramyl-(pentapeptide) pyrophosphoryl-undecaprenol N-acetylglucosamine transferase (Mycolicibacterium smegmatis (strain ATCC 700084 / mc(2)155) (Mycobacterium smegmatis)).